The following is a 149-amino-acid chain: Ribonuclease HI (149 aa).

One can recognise an RNase H type-1 domain in the interval 1–140 (MIIGYFDGLC…AYELVRRGKL (140 aa)). Mg(2+) is bound by residues Asp7, Glu52, Asp76, and Asp125. Asp7, Glu52, Asp76, and Asp125 together coordinate Mn(2+). Cysteines 58 and 145 form a disulfide.

In terms of assembly, monomer. It depends on Mn(2+) as a cofactor. Mg(2+) is required as a cofactor. Co(2+) serves as cofactor. The cofactor is Ni(2+). In terms of processing, the disulfide bond confers considerable stability to the protein.

Its subcellular location is the cytoplasm. It carries out the reaction Endonucleolytic cleavage to 5'-phosphomonoester.. Its function is as follows. Nuclease that specifically degrades the RNA of RNA-DNA hybrids. Endonucleolytically removes RNA primers from the Okazaki fragments of lagging strand synthesis on its own. In the presence of Mn(2+) or Co(2+) can also cleave an RNA-RNA hybrid; the dsRNase activity is 10- 100-fold lower than RNase H activity. Complements the temperature-sensitive phenotype of an E.coli double rnhA/rnhB (RNase H) disruption mutant. This chain is Ribonuclease HI (rnhA), found in Sulfurisphaera tokodaii (strain DSM 16993 / JCM 10545 / NBRC 100140 / 7) (Sulfolobus tokodaii).